An 825-amino-acid polypeptide reads, in one-letter code: Breast cancer anti-estrogen resistance protein 3 homolog (825 aa).

An N-acetylalanine modification is found at A2. The disordered stretch occupies residues 31-93 (KSPLTEHRPD…PVTQDSIQES (63 aa)). S32, S78, S83, S182, and S290 each carry phosphoserine. Residues 75–93 (HSKSPQQNSPVTQDSIQES) show a composition bias toward polar residues. The SH2 domain maps to 154–253 (WYHGRIPRQV…QSGAIIFQPI (100 aa)). K334 carries the post-translational modification N6-methyllysine. Phosphoserine is present on residues S358, S363, and S375. At R442 the chain carries Omega-N-methylarginine. Phosphoserine is present on S471. Residues 548–818 (DPKVIAQHIL…TALSRKLEPP (271 aa)) form the Ras-GEF domain. A mediates the interaction with BCAR1/p130CAS region spans residues 744 to 748 (LATAR).

In terms of assembly, part of a complex comprised of PTPRA, BCAR1, BCAR3 (via SH2 domain) and SRC; the formation of the complex is dependent on integrin mediated-tyrosine phosphorylation of PTPRA. Within the complex, interacts (via SH2 domain) with PTPRA (when phosphorylated on 'Tyr-798'). Interacts (via Ras-GEF domain) with BCAR1. Interacts (via Ras-GEF domain) with NEDD9. Interacts with PTK2/FAK1. Interacts with PTPN1. Interacts (via SH2 domain) with EGFR (when tyrosine-phosphorylated). Phosphorylated on tyrosine residues.

The protein resides in the cytoplasm. It localises to the cell junction. Its subcellular location is the focal adhesion. Acts as an adapter protein downstream of several growth factor receptors to promote cell proliferation, migration, and redistribution of actin fibers. Specifically involved in INS/insulin signaling pathway by mediating MAPK1/ERK2-MAPK3/ERK1 activation and DNA synthesis. Promotes insulin-mediated membrane ruffling. In response to vasoconstrictor peptide EDN1, involved in the activation of RAP1 downstream of PTK2B via interaction with phosphorylated BCAR1. Inhibits cell migration and invasion via regulation of TGFB-mediated matrix digestion, actin filament rearrangement, and inhibition of invadopodia activity. May inhibit TGFB-SMAD signaling, via facilitating BCAR1 and SMAD2 and/or SMAD3 interaction. Regulates EGF-induced DNA synthesis. Required for the maintenance of ocular lens morphology and structural integrity, potentially via regulation of focal adhesion complex signaling. Acts upstream of PTPRA to regulate the localization of BCAR1 and PTPRA to focal adhesions, via regulation of SRC-mediated phosphorylation of PTPRA. Positively regulates integrin-induced tyrosine phosphorylation of BCAR1. Acts as a guanine nucleotide exchange factor (GEF) for small GTPases RALA, RAP1A and RRAS. However, in a contrasting study, lacks GEF activity towards RAP1. The polypeptide is Breast cancer anti-estrogen resistance protein 3 homolog (BCAR3) (Macaca fascicularis (Crab-eating macaque)).